Here is a 281-residue protein sequence, read N- to C-terminus: Sulfur carrier protein FdhD (281 aa).

Catalysis depends on Cys127, which acts as the Cysteine persulfide intermediate. Position 264–269 (264–269 (FAREGR)) interacts with Mo-bis(molybdopterin guanine dinucleotide).

Belongs to the FdhD family.

The protein resides in the cytoplasm. In terms of biological role, required for formate dehydrogenase (FDH) activity. Acts as a sulfur carrier protein that transfers sulfur from IscS to the molybdenum cofactor prior to its insertion into FDH. This is Sulfur carrier protein FdhD from Mannheimia succiniciproducens (strain KCTC 0769BP / MBEL55E).